A 197-amino-acid polypeptide reads, in one-letter code: dITP/XTP pyrophosphatase (197 aa).

Residue 7–12 (TGNEQK) coordinates substrate. Residues Glu-44 and Asp-73 each coordinate Mg(2+). Catalysis depends on Asp-73, which acts as the Proton acceptor. Residues Thr-74, 156–159 (FGYD), Lys-179, and 184–185 (HR) each bind substrate.

The protein belongs to the HAM1 NTPase family. Homodimer. Mg(2+) serves as cofactor.

The catalysed reaction is XTP + H2O = XMP + diphosphate + H(+). The enzyme catalyses dITP + H2O = dIMP + diphosphate + H(+). It carries out the reaction ITP + H2O = IMP + diphosphate + H(+). Its function is as follows. Pyrophosphatase that catalyzes the hydrolysis of nucleoside triphosphates to their monophosphate derivatives, with a high preference for the non-canonical purine nucleotides XTP (xanthosine triphosphate), dITP (deoxyinosine triphosphate) and ITP. Seems to function as a house-cleaning enzyme that removes non-canonical purine nucleotides from the nucleotide pool, thus preventing their incorporation into DNA/RNA and avoiding chromosomal lesions. The polypeptide is dITP/XTP pyrophosphatase (Elusimicrobium minutum (strain Pei191)).